Here is a 299-residue protein sequence, read N- to C-terminus: tRNA dimethylallyltransferase (299 aa).

ATP is bound at residue 13–20 (GPTASGKT). 15–20 (TASGKT) is a substrate binding site. The tract at residues 38–41 (DSRQ) is interaction with substrate tRNA.

This sequence belongs to the IPP transferase family. In terms of assembly, monomer. Requires Mg(2+) as cofactor.

It catalyses the reaction adenosine(37) in tRNA + dimethylallyl diphosphate = N(6)-dimethylallyladenosine(37) in tRNA + diphosphate. Catalyzes the transfer of a dimethylallyl group onto the adenine at position 37 in tRNAs that read codons beginning with uridine, leading to the formation of N6-(dimethylallyl)adenosine (i(6)A). This is tRNA dimethylallyltransferase from Parasynechococcus marenigrum (strain WH8102).